A 942-amino-acid polypeptide reads, in one-letter code: VPS35 endosomal protein sorting factor-like (942 aa).

Belongs to the VPS35L family. In terms of assembly, component of the heterotrimeric retriever complex.

Its subcellular location is the endosome. Acts as a component of the retriever complex. The retriever complex is a heterotrimeric complex related to retromer cargo-selective complex (CSC) and essential for retromer-independent retrieval and recycling of numerous cargos. The polypeptide is VPS35 endosomal protein sorting factor-like (Drosophila melanogaster (Fruit fly)).